The chain runs to 801 residues: Ribosome biogenesis protein ERB1 (801 aa).

2 disordered regions span residues 1 to 135 (MGSK…LEDR) and 358 to 377 (PEYLPTKEEREEWEKMDPED). Residues 35–90 (SEDEEDYIPSSEVDEDDDDDADESASEDSDDSNDSEDDEVEEDDEALLSDEIPSEG) are compositionally biased toward acidic residues. 3 stretches are compositionally biased toward basic and acidic residues: residues 91 to 113 (ESEKDQDLAESKESKQDQDKEPS), 124 to 135 (PPRKEDEELEDR), and 362 to 377 (PTKEEREEWEKMDPED). WD repeat units lie at residues 451–490 (GHEGRVRSVAIDPTGVALATGGDDGTVRVWELLTGRQVWS) and 494–534 (NGDE…VTPA). Residues 546–570 (GFGHATNGKQQANLPPGKEPPGKWA) are disordered. WD repeat units follow at residues 586–628 (TVRS…TQIP), 631–669 (KLNGLAQTASFHPLRPLFFVATQRSIRCYDLQKLELVKI), 672–711 (PGAKWISSFDVHPGGDNLVVGSYDKRLLWHDLDLSNRPYK), 715–755 (FHTE…DQLE), and 771–801 (VNKLGVLDIDWHPREPWCVSAGADGTARLWM).

This sequence belongs to the WD repeat BOP1/ERB1 family. Component of the NOP7 complex, composed of ERB1, NOP7 and YTM1. The complex is held together by ERB1, which interacts with NOP7 via its N-terminal domain and with YTM1 via a high-affinity interaction between the seven-bladed beta-propeller domains of the 2 proteins. The NOP7 complex associates with the 66S pre-ribosome.

It localises to the nucleus. The protein localises to the nucleolus. It is found in the nucleoplasm. In terms of biological role, component of the NOP7 complex, which is required for maturation of the 25S and 5.8S ribosomal RNAs and formation of the 60S ribosome. In Chaetomium thermophilum (strain DSM 1495 / CBS 144.50 / IMI 039719) (Thermochaetoides thermophila), this protein is Ribosome biogenesis protein ERB1.